The chain runs to 535 residues: Cytochrome P450 monooxygenase claP (535 aa).

The next 2 helical transmembrane spans lie at 7–27 (IGTLDVLIFLVFLWLLSKLVG) and 225–245 (YFSMVIFLLAQVFPILLKLPT). Residue cysteine 472 participates in heme binding.

It belongs to the cytochrome P450 family. Heme serves as cofactor.

Its subcellular location is the membrane. It participates in secondary metabolite biosynthesis; terpenoid biosynthesis. Functionally, cytochrome P450 monooxygenase; part of the gene cluster that mediates the biosynthesis of clavilactone A, a meroterpenoid that features a unique benzo-fused ten-membered carbocyclic ring unit with an alpha,beta-epoxy-gamma-lactone moiety, forming an intriguing 10/5/3 tricyclic nested skeleton. Cytochrome P450 monooxygenases claO, claP, claQ, claU, and claW are close orthologs, suggesting that a redundant function or pseudogenes are present in the cla cluster. These monoxygenases are not involved in clavilactone A biosynthesis nor its modification. ClaR, ClaS and ClaT are sufficient to produce clavilactone A. The biosynthesis begins with the prenyltransferase claS that transfers geranyl pyrophosphate (GPP) to hydroquinone to produces geranylhydroquinone. The cytochrome P450 monooxygenase claR then catalyzes the diradical coupling reaction between the intramolecular hydroquinone and allyl moieties to form the benzo-fused ten-membered carbocyclic ring unit of wigantol. Finally the cytochrome P450 monooxygenase claT exquisitely and stereoselectively assembles the alpha,beta-epoxy-gamma-lactone moiety, producing clavilactone A via arnebinol A. This is Cytochrome P450 monooxygenase claP from Ampulloclitocybe clavipes (Club foot).